The chain runs to 87 residues: Insertion element IS407 uncharacterized 10.0 kDa protein (87 aa).

The protein belongs to the transposase 8 family.

This is Insertion element IS407 uncharacterized 10.0 kDa protein from Burkholderia multivorans (strain ATCC 17616 / 249).